A 235-amino-acid chain; its full sequence is CMP-N,N'-diacetyllegionaminic acid synthase (235 aa).

It belongs to the CMP-NeuNAc synthase family.

It catalyses the reaction N,N-diacetyllegionaminate + CTP = CMP-N,N-diacetyllegionaminate + diphosphate. In terms of biological role, involved in biosynthesis of legionaminic acid (5,7-diamino-3,5,7,9-tetradeoxy-D-glycero-D-galacto-non-2-ulosonic acid)(Leg), a sialic acid-like derivative that is incorporated into flagellin via O-linkage to Ser/Thr. Catalyzes the conversion of N,N'-diacetyllegionaminic acid (Leg5Ac7Ac) and CTP into CMP-N,N'-diacetyllegionaminic acid (CMP-Leg5Ac7Ac). The sequence is that of CMP-N,N'-diacetyllegionaminic acid synthase (legF) from Campylobacter jejuni subsp. jejuni serotype O:2 (strain ATCC 700819 / NCTC 11168).